A 184-amino-acid polypeptide reads, in one-letter code: LELRPRARYSLQLRARLNGPTYQGPWSAWSPPARVSTGSETAWITLVTALLLVLSLSALLGLLLLKWQFPAHYRRLRHALWPSLPDLHRVLGQYLRDTAALSPSKATVTDSCEEVEPSLLEILPKSSESTPLPLCPSQPQMDYRGLQPCLRTMPLSVCPPMAETGSCCTTHIANHSYLPLSYWQ.

The WSXWS motif motif lies at 26 to 30; sequence WSAWS. The helical transmembrane segment at 44–64 threads the bilayer; the sequence is ITLVTALLLVLSLSALLGLLL. The Box 1 motif signature appears at 80 to 88; it reads LWPSLPDLH.

It belongs to the type I cytokine receptor family. Type 1 subfamily.

Its subcellular location is the membrane. Functionally, truncated form of the receptor for thrombopoietin. The chain is Myeloproliferative leukemia protein (V-MPL) from Mus musculus (Mouse).